Consider the following 409-residue polypeptide: Arginine deiminase (409 aa).

Residue Cys-399 is the Amidino-cysteine intermediate of the active site.

It belongs to the arginine deiminase family.

It is found in the cytoplasm. It carries out the reaction L-arginine + H2O = L-citrulline + NH4(+). It participates in amino-acid degradation; L-arginine degradation via ADI pathway; carbamoyl phosphate from L-arginine: step 1/2. The polypeptide is Arginine deiminase (Streptococcus pneumoniae (strain JJA)).